Consider the following 396-residue polypeptide: Tryptophan synthase beta chain (396 aa).

Lysine 86 is subject to N6-(pyridoxal phosphate)lysine.

Belongs to the TrpB family. In terms of assembly, tetramer of two alpha and two beta chains. The cofactor is pyridoxal 5'-phosphate.

The enzyme catalyses (1S,2R)-1-C-(indol-3-yl)glycerol 3-phosphate + L-serine = D-glyceraldehyde 3-phosphate + L-tryptophan + H2O. It functions in the pathway amino-acid biosynthesis; L-tryptophan biosynthesis; L-tryptophan from chorismate: step 5/5. Functionally, the beta subunit is responsible for the synthesis of L-tryptophan from indole and L-serine. This Pectobacterium atrosepticum (strain SCRI 1043 / ATCC BAA-672) (Erwinia carotovora subsp. atroseptica) protein is Tryptophan synthase beta chain.